We begin with the raw amino-acid sequence, 513 residues long: Bifunctional pantoate ligase/cytidylate kinase (513 aa).

A pantoate--beta-alanine ligase region spans residues 1-283; sequence MVQVFRTIAG…VGSTRLIDNL (283 aa). Position 30 to 37 (30 to 37) interacts with ATP; that stretch reads MGSLHAGH. Histidine 37 serves as the catalytic Proton donor. Residue glutamine 61 coordinates (R)-pantoate. Glutamine 61 serves as a coordination point for beta-alanine. 150 to 153 contacts ATP; sequence GAKD. Glutamine 156 is a binding site for (R)-pantoate. ATP contacts are provided by residues valine 179 and 187–190; that span reads MSSR. The cytidylate kinase stretch occupies residues 284–513; sequence VLNHRLPIIA…IELYKKYNKG (230 aa).

This sequence in the N-terminal section; belongs to the pantothenate synthetase family. It in the C-terminal section; belongs to the cytidylate kinase family. Type 1 subfamily.

It localises to the cytoplasm. The enzyme catalyses (R)-pantoate + beta-alanine + ATP = (R)-pantothenate + AMP + diphosphate + H(+). The catalysed reaction is CMP + ATP = CDP + ADP. It carries out the reaction dCMP + ATP = dCDP + ADP. Its pathway is cofactor biosynthesis; (R)-pantothenate biosynthesis; (R)-pantothenate from (R)-pantoate and beta-alanine: step 1/1. Catalyzes the condensation of pantoate with beta-alanine in an ATP-dependent reaction via a pantoyl-adenylate intermediate. Its function is as follows. Catalyzes the transfer of a phosphate group from ATP to either CMP or dCMP to form CDP or dCDP and ADP, respectively. This chain is Bifunctional pantoate ligase/cytidylate kinase, found in Synechocystis sp. (strain ATCC 27184 / PCC 6803 / Kazusa).